A 209-amino-acid polypeptide reads, in one-letter code: Large ribosomal subunit protein uL3 (209 aa).

The disordered stretch occupies residues A132 to G153. The residue at position 150 (Q150) is an N5-methylglutamine.

Belongs to the universal ribosomal protein uL3 family. Part of the 50S ribosomal subunit. Forms a cluster with proteins L14 and L19. Post-translationally, methylated by PrmB.

Functionally, one of the primary rRNA binding proteins, it binds directly near the 3'-end of the 23S rRNA, where it nucleates assembly of the 50S subunit. The polypeptide is Large ribosomal subunit protein uL3 (Enterobacter sp. (strain 638)).